A 286-amino-acid chain; its full sequence is 3-amino-tetrahydro-pyrrolizinone reductase (286 aa).

Tyr-146 (proton acceptor) is an active-site residue.

It belongs to the short-chain dehydrogenases/reductases (SDR) family.

The catalysed reaction is 3-amino-5,6,7,7a-tetrahydro-1H-pyrrolizin-1-one + AH2 = 3-amino-tetrahydro-1H-pyrrolizin-1-ol + A. Functionally, involved in the biosynthetic pathway of pyrrolizwilline, a pyrrolizidine alkaloid. Catalyzes the reduction of 3-amino-tetrahydro-pyrrolizinone to 3-amino-tetrahydro-pyrrolizinol. This chain is 3-amino-tetrahydro-pyrrolizinone reductase (xhpD), found in Xenorhabdus hominickii.